Consider the following 252-residue polypeptide: N-glycosylase/DNA lyase (252 aa).

8-oxoguanine contacts are provided by Gln32, Ser60, and Trp71. The helix-hairpin-helix stretch occupies residues 129-193 (KTYYSDMEKL…KDSRIEKYTL (65 aa)). Lys153 serves as the catalytic Schiff-base intermediate with DNA. The 8-oxoguanine site is built by Phe157 and Pro183. Asp185 is an active-site residue. Asp219 and Trp223 together coordinate 8-oxoguanine.

This sequence belongs to the archaeal N-glycosylase/DNA lyase (AGOG) family.

The catalysed reaction is 2'-deoxyribonucleotide-(2'-deoxyribose 5'-phosphate)-2'-deoxyribonucleotide-DNA = a 3'-end 2'-deoxyribonucleotide-(2,3-dehydro-2,3-deoxyribose 5'-phosphate)-DNA + a 5'-end 5'-phospho-2'-deoxyribonucleoside-DNA + H(+). In terms of biological role, DNA repair enzyme that is part of the base excision repair (BER) pathway; protects from oxidative damage by removing the major product of DNA oxidation, 8-oxoguanine (GO), from single- and double-stranded DNA substrates. This is N-glycosylase/DNA lyase from Methanococcus maripaludis (strain DSM 14266 / JCM 13030 / NBRC 101832 / S2 / LL).